Consider the following 350-residue polypeptide: Histidinol-phosphate aminotransferase (350 aa).

Position 209 is an N6-(pyridoxal phosphate)lysine (K209).

It belongs to the class-II pyridoxal-phosphate-dependent aminotransferase family. Histidinol-phosphate aminotransferase subfamily. As to quaternary structure, homodimer. Pyridoxal 5'-phosphate serves as cofactor.

It carries out the reaction L-histidinol phosphate + 2-oxoglutarate = 3-(imidazol-4-yl)-2-oxopropyl phosphate + L-glutamate. It participates in amino-acid biosynthesis; L-histidine biosynthesis; L-histidine from 5-phospho-alpha-D-ribose 1-diphosphate: step 7/9. The protein is Histidinol-phosphate aminotransferase of Christiangramia forsetii (strain DSM 17595 / CGMCC 1.15422 / KT0803) (Gramella forsetii).